Here is a 141-residue protein sequence, read N- to C-terminus: Vesicle-associated membrane protein 4 (141 aa).

Residues 1–51 (MPPKFKRHLNDDDVTGSVKSERRNLLEDDSDEEEDFFLRGPSGPRFGPRND) form a disordered region. At 1–118 (MPPKFKRHLN…MWWRGCKIKA (118 aa)) the chain is on the cytoplasmic side. Residues S17 and S30 each carry the phosphoserine modification. The v-SNARE coiled-coil homology domain occupies 52 to 112 (KIKHVQNQVD…KQLRRQMWWR (61 aa)). Residues 119–139 (IMALAAAILLLMIIILIVVKF) form a helical; Anchor for type IV membrane protein membrane-spanning segment. The Vesicular segment spans residues 140 to 141 (RT).

This sequence belongs to the synaptobrevin family. In terms of assembly, identified in a complex containing STX6, STX12, VAMP4 and VTI1A. Interacts with BAIAP3; this interaction is increased in the presence of calcium. Post-translationally, (Microbial infection) Targeted and hydrolyzed by C.botulinum neurotoxin type X (BoNT/X) which hydrolyzes the 87-Arg-|-Ser-88 bond and probably inhibits neurotransmitter release. It remains unknown whether BoNT/X is ever produced, or what organisms it targets.

It localises to the golgi apparatus. The protein localises to the trans-Golgi network membrane. In terms of biological role, involved in the pathway that functions to remove an inhibitor (probably synaptotagmin-4) of calcium-triggered exocytosis during the maturation of secretory granules. May be a marker for this sorting pathway that is critical for remodeling the secretory response of granule. The polypeptide is Vesicle-associated membrane protein 4 (Vamp4) (Mus musculus (Mouse)).